A 445-amino-acid chain; its full sequence is Protein cereblon (445 aa).

Residues 1–48 (MAGEGDQQDAAHNMGNHLPLLPADSEDEDDEIEMEVEDQDSKEARKPN) form a disordered region. The span at 24–38 (DSEDEDDEIEMEVED) shows a compositional bias: acidic residues. S25 bears the Phosphoserine mark. Residues 84–322 (IPVLPEVLMI…CELDIMNKCT (239 aa)) form the Lon N-terminal domain. The 109-residue stretch at 321-429 (CTSLCCKQCQ…LTRSALLPTI (109 aa)) folds into the CULT domain. Positions 326 and 329 each coordinate Zn(2+). H381, W383, and W389 together coordinate (S)-thalidomide. Zn(2+) contacts are provided by C394 and C397.

Belongs to the CRBN family. In terms of assembly, component of a DCX (DDB1-CUL4-X-box) protein ligase complex, at least composed of CRBN, CUL4A, DDB1 and RBX1. Interacts directly with DDB1. Interacts with KCNT1. Interacts with ILF2. Interacts with TRAF6 and ECSIT. Post-translationally, ubiquitinated, ubiquitination is mediated by its own DCX protein ligase complex. In terms of tissue distribution, highly expressed in brain.

It localises to the cytoplasm. The protein localises to the nucleus. It is found in the membrane. Its pathway is protein modification; protein ubiquitination. Substrate recognition component of a DCX (DDB1-CUL4-X-box) E3 protein ligase complex that mediates the ubiquitination and subsequent proteasomal degradation of target proteins, such as MEIS2, ILF2 or GLUL. Normal degradation of key regulatory proteins is required for normal limb outgrowth and expression of the fibroblast growth factor FGF8. Maintains presynaptic glutamate release and consequently, cognitive functions such as memory and learning, by negatively regulating large-conductance calcium-activated potassium (BK) channels in excitatory neurons. Likely to function by regulating the assembly and neuronal surface expression of BK channels via its interaction with KCNT1. May also be involved in regulating anxiety-like behaviors via a BK channel-independent mechanism. Plays a negative role in TLR4 signaling by interacting with TRAF6 and ECSIT, leading to inhibition of ECSIT ubiquitination, an important step of the signaling. This is Protein cereblon (Crbn) from Mus musculus (Mouse).